A 436-amino-acid polypeptide reads, in one-letter code: Enolase (436 aa).

Q167 contacts (2R)-2-phosphoglycerate. E209 acts as the Proton donor in catalysis. Positions 246, 291, and 318 each coordinate Mg(2+). (2R)-2-phosphoglycerate contacts are provided by K343, R372, S373, and K394. K343 serves as the catalytic Proton acceptor.

It belongs to the enolase family. In terms of assembly, component of the RNA degradosome, a multiprotein complex involved in RNA processing and mRNA degradation. The cofactor is Mg(2+).

The protein localises to the cytoplasm. It localises to the secreted. Its subcellular location is the cell surface. The catalysed reaction is (2R)-2-phosphoglycerate = phosphoenolpyruvate + H2O. The protein operates within carbohydrate degradation; glycolysis; pyruvate from D-glyceraldehyde 3-phosphate: step 4/5. Functionally, catalyzes the reversible conversion of 2-phosphoglycerate (2-PG) into phosphoenolpyruvate (PEP). It is essential for the degradation of carbohydrates via glycolysis. The sequence is that of Enolase from Actinobacillus pleuropneumoniae serotype 5b (strain L20).